Here is a 394-residue protein sequence, read N- to C-terminus: Nuclear hormone receptor family member nhr-18 (394 aa).

A DNA-binding region (nuclear receptor) is located at residues 8-83 (SGSCEVCGDK…VGMDTRRFQT (76 aa)). 2 consecutive NR C4-type zinc fingers follow at residues 11–31 (CEVCGDKTSGRHFGVMSCRAC) and 48–71 (CPNGTCHTSVNGKFNCKQCRLKKC). One can recognise an NR LBD domain in the interval 134-394 (MLQKPTNHVL…FSHPEMFEAT (261 aa)).

This sequence belongs to the nuclear hormone receptor family.

It localises to the nucleus. In terms of biological role, orphan nuclear receptor. This is Nuclear hormone receptor family member nhr-18 (nhr-18) from Caenorhabditis elegans.